Here is a 265-residue protein sequence, read N- to C-terminus: tRNA pseudouridine synthase A (265 aa).

D58 serves as the catalytic Nucleophile. Y116 lines the substrate pocket.

Belongs to the tRNA pseudouridine synthase TruA family. Homodimer.

It carries out the reaction uridine(38/39/40) in tRNA = pseudouridine(38/39/40) in tRNA. Its function is as follows. Formation of pseudouridine at positions 38, 39 and 40 in the anticodon stem and loop of transfer RNAs. This is tRNA pseudouridine synthase A from Neisseria meningitidis serogroup C / serotype 2a (strain ATCC 700532 / DSM 15464 / FAM18).